A 181-amino-acid chain; its full sequence is Endoribonuclease YbeY (181 aa).

Residues H120, H124, and H130 each contribute to the Zn(2+) site. The tract at residues 157 to 181 (AGGKRPAGGADGADGAGEPGPTAAR) is disordered. The span at 161–174 (RPAGGADGADGAGE) shows a compositional bias: gly residues.

The protein belongs to the endoribonuclease YbeY family. Requires Zn(2+) as cofactor.

The protein localises to the cytoplasm. Its function is as follows. Single strand-specific metallo-endoribonuclease involved in late-stage 70S ribosome quality control and in maturation of the 3' terminus of the 16S rRNA. The sequence is that of Endoribonuclease YbeY from Frankia alni (strain DSM 45986 / CECT 9034 / ACN14a).